We begin with the raw amino-acid sequence, 117 residues long: Probable non-functional immunoglobulinn kappa variable 1-37 (117 aa).

An N-terminal signal peptide occupies residues methionine 1 to cysteine 22. Residues isoleucine 24–proline 117 enclose the Ig-like domain.

As to quaternary structure, most probably, the immunoglobulin is not assembled due to incorrect folding of light chain. Immunoglobulins are composed of two identical heavy chains and two identical light chains; disulfide-linked.

The protein localises to the secreted. It localises to the cell membrane. Probable non-functional open reading frame (ORF) of V region of the variable domain of immunoglobulin light chains. Non-functional ORF generally cannot participate in the synthesis of a productive immunoglobulin chain due to altered V-(D)-J or switch recombination and/or splicing site (at mRNA level) and/or conserved amino acid change (protein level). Immunoglobulins, also known as antibodies, are membrane-bound or secreted glycoproteins produced by B lymphocytes. In the recognition phase of humoral immunity, the membrane-bound immunoglobulins serve as receptors which, upon binding of a specific antigen, trigger the clonal expansion and differentiation of B lymphocytes into immunoglobulins-secreting plasma cells. Secreted immunoglobulins mediate the effector phase of humoral immunity, which results in the elimination of bound antigens. The antigen binding site is formed by the variable domain of one heavy chain, together with that of its associated light chain. Thus, each immunoglobulin has two antigen binding sites with remarkable affinity for a particular antigen. The variable domains are assembled by a process called V-(D)-J rearrangement and can then be subjected to somatic hypermutations which, after exposure to antigen and selection, allow affinity maturation for a particular antigen. The protein is Probable non-functional immunoglobulinn kappa variable 1-37 of Homo sapiens (Human).